Consider the following 275-residue polypeptide: 3-methyl-2-oxobutanoate hydroxymethyltransferase (275 aa).

Mg(2+) is bound by residues aspartate 51 and aspartate 90. 3-methyl-2-oxobutanoate contacts are provided by residues 51–52 (DS), aspartate 90, and lysine 120. Glutamate 122 is a binding site for Mg(2+). The Proton acceptor role is filled by glutamate 189.

Belongs to the PanB family. In terms of assembly, homodecamer; pentamer of dimers. The cofactor is Mg(2+).

It localises to the cytoplasm. It carries out the reaction 3-methyl-2-oxobutanoate + (6R)-5,10-methylene-5,6,7,8-tetrahydrofolate + H2O = 2-dehydropantoate + (6S)-5,6,7,8-tetrahydrofolate. The protein operates within cofactor biosynthesis; (R)-pantothenate biosynthesis; (R)-pantoate from 3-methyl-2-oxobutanoate: step 1/2. Its function is as follows. Catalyzes the reversible reaction in which hydroxymethyl group from 5,10-methylenetetrahydrofolate is transferred onto alpha-ketoisovalerate to form ketopantoate. This Phenylobacterium zucineum (strain HLK1) protein is 3-methyl-2-oxobutanoate hydroxymethyltransferase.